The chain runs to 262 residues: Hydroxyethylthiazole kinase (262 aa).

Position 43 (methionine 43) interacts with substrate. The ATP site is built by arginine 118 and threonine 164. A substrate-binding site is contributed by alanine 191.

The protein belongs to the Thz kinase family. Mg(2+) is required as a cofactor.

It carries out the reaction 5-(2-hydroxyethyl)-4-methylthiazole + ATP = 4-methyl-5-(2-phosphooxyethyl)-thiazole + ADP + H(+). It functions in the pathway cofactor biosynthesis; thiamine diphosphate biosynthesis; 4-methyl-5-(2-phosphoethyl)-thiazole from 5-(2-hydroxyethyl)-4-methylthiazole: step 1/1. In terms of biological role, catalyzes the phosphorylation of the hydroxyl group of 4-methyl-5-beta-hydroxyethylthiazole (THZ). The sequence is that of Hydroxyethylthiazole kinase from Cereibacter sphaeroides (strain ATCC 17025 / ATH 2.4.3) (Rhodobacter sphaeroides).